The chain runs to 199 residues: Probable thymidylate kinase (199 aa).

Glycine 9–threonine 16 is an ATP binding site.

The protein belongs to the thymidylate kinase family.

It catalyses the reaction dTMP + ATP = dTDP + ADP. This is Probable thymidylate kinase from Methanococcus maripaludis (strain C6 / ATCC BAA-1332).